A 38-amino-acid polypeptide reads, in one-letter code: Very early lactation protein (38 aa).

In terms of assembly, homodimer. In terms of processing, O-glycosylated. Contains sialic acid residues. As to expression, found in the whey fraction of milk (at protein level).

It is found in the secreted. The sequence is that of Very early lactation protein from Trichosurus vulpecula (Brush-tailed possum).